A 75-amino-acid chain; its full sequence is Pi-hexatoxin-Hi1a (75 aa).

Cystine bridges form between C3–C18, C10–C23, C17–C33, C40–C55, C47–C60, and C54–C71. Domain repeat units follow at residues 3–33 and 40–71; these read CIRK…FEVC and CLVK…SSVC. A 2 X approximate repeats with cysteine pattern C-C-CC-C-C region spans residues 3–71; it reads CIRKWLSCVD…KRSGNKSSVC (69 aa).

Belongs to the psalmotoxin-1 family. Double-knot toxin subfamily. Expressed by the venom gland.

It is found in the secreted. In terms of biological role, this toxin potently and selectively inhibits ASIC1a (IC(50)=0.4 nM on rASIC1a and IC(50)=0.52 nM on hASIC1a), an isoform of the gene ASIC1. It incompletely inhibits ASIC1a activation in a pH-independent and slowly reversible manner (Tau(off)=14.2 minutes for rASIC1a and 31.8 minutes for hASIC1a). This toxin acts by binding to and stabilizing the closed state of the channel, thereby impeding the transition into a conducting state. This toxin may bind to the acidic pocket of ASIC1a, since mutation of a key residue of this pocket (Arg-350) abolishes the ability of the toxin to inhibit ASIC1a. In addition, it shows antiparasitic activities, since it moderately inhibits the larval development of the major pathogenic nematode of ruminants (H.contortus, IC(50)=22.9 uM). In vivo, this toxin protects the brain from neuronal injury when administered up to 8 hours after stroke onset. The chain is Pi-hexatoxin-Hi1a from Hadronyche infensa (Fraser island funnel-web spider).